The following is a 420-amino-acid chain: Putative epoxide hydrolase (420 aa).

Belongs to the peptidase S33 family.

The protein operates within mycotoxin biosynthesis. In terms of biological role, putative epoxide hydrolase; part of the fragmented gene cluster that mediates the biosynthesis of dothistromin (DOTH), a polyketide toxin very similar in structure to the aflatoxin precursor, versicolorin B. The first step of the pathway is the conversion of acetate to norsolorinic acid (NOR) and requires the fatty acid synthase subunits hexA and hexB, as well as the polyketide synthase pksA. PksA combines a hexanoyl starter unit and 7 malonyl-CoA extender units to synthesize the precursor NOR. The hexanoyl starter unit is provided to the acyl-carrier protein (ACP) domain by the fungal fatty acid synthase hexA/hexB. The second step is the conversion of NOR to averantin (AVN) and requires the norsolorinic acid ketoreductase nor1, which catalyzes the dehydration of norsolorinic acid to form (1'S)-averantin. The cytochrome P450 monooxygenase avnA then catalyzes the hydroxylation of AVN to 5'hydroxyaverantin (HAVN). The next step is performed by adhA that transforms HAVN to averufin (AVF). Averufin might then be converted to hydroxyversicolorone by cypX and avfA. Hydroxyversicolorone is further converted versiconal hemiacetal acetate (VHA) by moxY. VHA is then the substrate for the versiconal hemiacetal acetate esterase est1 to yield versiconal (VAL). Versicolorin B synthase vbsA then converts VAL to versicolorin B (VERB) by closing the bisfuran ring. Then, the activity of the versicolorin B desaturase verB leads to versicolorin A (VERA). DotB, a predicted chloroperoxidase, may perform epoxidation of the A-ring of VERA. Alternatively, a cytochrome P450, such as cypX or avnA could catalyze this step. It is also possible that another, uncharacterized, cytochrome P450 enzyme is responsible for this step. Opening of the epoxide could potentially be achieved by the epoxide hydrolase epoA. However, epoA seems not to be required for DOTH biosynthesis, but other epoxide hydrolases may have the ability to complement this hydrolysis. Alternatively, opening of the epoxide ring could be achieved non-enzymatically. The next step is the deoxygenation of ring A to yield the 5,8-dihydroxyanthraquinone which is most likely catalyzed by the NADPH dehydrogenase encoded by ver1. The last stages of DOTH biosynthesis are proposed to involve hydroxylation of the bisfuran. OrdB and norB might have oxidative roles here. An alternative possibility is that cytochrome P450 monoogenases such as avnA and cypX might perform these steps in addition to previously proposed steps. The polypeptide is Putative epoxide hydrolase (Dothistroma septosporum (Red band needle blight fungus)).